An 81-amino-acid polypeptide reads, in one-letter code: Acyl carrier protein (81 aa).

Residues 2 to 80 (ASKDEILAGL…DAVNFIDNAQ (79 aa)) enclose the Carrier domain. Ser-40 carries the O-(pantetheine 4'-phosphoryl)serine modification.

The protein belongs to the acyl carrier protein (ACP) family. Post-translationally, 4'-phosphopantetheine is transferred from CoA to a specific serine of apo-ACP by AcpS. This modification is essential for activity because fatty acids are bound in thioester linkage to the sulfhydryl of the prosthetic group.

It is found in the cytoplasm. It participates in lipid metabolism; fatty acid biosynthesis. Its function is as follows. Carrier of the growing fatty acid chain in fatty acid biosynthesis. This Kocuria rhizophila (strain ATCC 9341 / DSM 348 / NBRC 103217 / DC2201) protein is Acyl carrier protein.